The chain runs to 730 residues: Ribosomal RNA large subunit methyltransferase K/L (730 aa).

In terms of domain architecture, THUMP spans 46 to 157 (TAYRLCLWSR…RGEAILSLDL (112 aa)).

It belongs to the methyltransferase superfamily. RlmKL family.

Its subcellular location is the cytoplasm. The catalysed reaction is guanosine(2445) in 23S rRNA + S-adenosyl-L-methionine = N(2)-methylguanosine(2445) in 23S rRNA + S-adenosyl-L-homocysteine + H(+). It catalyses the reaction guanosine(2069) in 23S rRNA + S-adenosyl-L-methionine = N(2)-methylguanosine(2069) in 23S rRNA + S-adenosyl-L-homocysteine + H(+). Functionally, specifically methylates the guanine in position 2445 (m2G2445) and the guanine in position 2069 (m7G2069) of 23S rRNA. The sequence is that of Ribosomal RNA large subunit methyltransferase K/L from Pseudomonas putida (strain W619).